The chain runs to 390 residues: Neutrophil cytosol factor 1 (390 aa).

The PX domain maps to T4 to L125. SH3 domains follow at residues I156–S215 and Y226–E285. Positions Q291–V390 are disordered. Residues S304, S321, S329, and S346 each carry the phosphoserine modification. Positions I374 to K383 are enriched in basic and acidic residues.

Component of the phagocyte NADPH oxidase complex composed of an obligatory core heterodimer formed by the membrane proteins CYBA and CYBB and the cytosolic regulatory subunits NCF1/p47-phox, NCF2/p67-phox, NCF4/p40-phox and the small GTPase RAC1 or RAC2. Part of a cytosolic complex composed at least by NCF1, NCF2 and NCF4. Interacts (via C-terminus) with NCF2 (via the C-terminal SH3 domain). Interacts with NCF4. Interacts with CYBB. Interacts (via the second SH3 domain) with CYBA; interaction is phosphorylation-dependent. Interacts with NOXA1. Interacts with ADAM15. Interacts with TRAF4. Interacts with FASLG. Interacts with PARK7 (via C-terminus); the interaction is enhanced by LPS and modulates NCF1 phosphorylation and membrane translocation. Phosphorylated by PRKCD; phosphorylation induces activation of NCF1, leading to assembly and activation of the NADPH oxidase complex.

It is found in the cytoplasm. It localises to the cytosol. The protein localises to the membrane. In terms of biological role, subunit of the phagocyte NADPH oxidase complex that mediates the transfer of electrons from cytosolic NADPH to O2 to produce the superoxide anion (O2(-)). In the activated complex, electrons are first transferred from NADPH to flavin adenine dinucleotide (FAD) and subsequently transferred via two heme molecules to molecular oxygen, producing superoxide through an outer-sphere reaction. Activation of the NADPH oxidase complex is initiated by the assembly of cytosolic subunits of the NADPH oxidase complex with the core NADPH oxidase complex to form a complex at the plasma membrane or phagosomal membrane. This activation process is initiated by phosphorylation dependent binding of the cytosolic NCF1/p47-phox subunit to the C-terminus of CYBA/p22-phox. The polypeptide is Neutrophil cytosol factor 1 (Mus musculus (Mouse)).